A 303-amino-acid chain; its full sequence is NAD kinase (303 aa).

Catalysis depends on D85, which acts as the Proton acceptor. Residues D85–G86, R90, N159–D160, K187, D189, A224, and Q259 each bind NAD(+).

This sequence belongs to the NAD kinase family. The cofactor is a divalent metal cation.

It is found in the cytoplasm. The catalysed reaction is NAD(+) + ATP = ADP + NADP(+) + H(+). Functionally, involved in the regulation of the intracellular balance of NAD and NADP, and is a key enzyme in the biosynthesis of NADP. Catalyzes specifically the phosphorylation on 2'-hydroxyl of the adenosine moiety of NAD to yield NADP. This is NAD kinase from Bdellovibrio bacteriovorus (strain ATCC 15356 / DSM 50701 / NCIMB 9529 / HD100).